Here is a 260-residue protein sequence, read N- to C-terminus: Small ribosomal subunit protein uS2 (260 aa).

This sequence belongs to the universal ribosomal protein uS2 family.

In Staphylococcus carnosus (strain TM300), this protein is Small ribosomal subunit protein uS2.